Consider the following 153-residue polypeptide: Large ribosomal subunit protein uL29 (153 aa).

The tract at residues 1–83 is large ribosomal subunit protein uL29; that stretch reads MNKELRAKTN…KEQTKQKEIQ (83 aa). The interval 84 to 153 is unknown; that stretch reads ESVKKIKQLR…NVKAKTKKKG (70 aa). Basic and acidic residues predominate over residues 100-121; it reads NKEKRLANAEKVKAAPKPEQKT. A disordered region spans residues 100 to 153; that stretch reads NKEKRLANAEKVKAAPKPEQKTKKVKKAPKKTETVKPTTNKNKKNVKAKTKKKG. A compositionally biased stretch (basic residues) spans 140 to 153; that stretch reads KNKKNVKAKTKKKG.

Belongs to the universal ribosomal protein uL29 family.

The protein is Large ribosomal subunit protein uL29 of Mycoplasmoides gallisepticum (strain R(low / passage 15 / clone 2)) (Mycoplasma gallisepticum).